The chain runs to 463 residues: Glutamyl-tRNA(Gln) amidotransferase subunit A, mitochondrial (463 aa).

Residues lysine 47 and serine 124 each act as charge relay system in the active site. The active-site Acyl-ester intermediate is serine 148.

This sequence belongs to the amidase family. GatA subfamily. Subunit of the heterotrimeric GatFAB amidotransferase (AdT) complex, composed of A, B and F subunits.

Its subcellular location is the mitochondrion. The catalysed reaction is L-glutamyl-tRNA(Gln) + L-glutamine + ATP + H2O = L-glutaminyl-tRNA(Gln) + L-glutamate + ADP + phosphate + H(+). Allows the formation of correctly charged Gln-tRNA(Gln) through the transamidation of misacylated Glu-tRNA(Gln) in the mitochondria. The reaction takes place in the presence of glutamine and ATP through an activated gamma-phospho-Glu-tRNA(Gln). The polypeptide is Glutamyl-tRNA(Gln) amidotransferase subunit A, mitochondrial (Eremothecium gossypii (strain ATCC 10895 / CBS 109.51 / FGSC 9923 / NRRL Y-1056) (Yeast)).